Reading from the N-terminus, the 97-residue chain is Protein GLUTAMINE DUMPER 7 (97 aa).

At Met-1–Lys-25 the chain is on the extracellular side. A helical membrane pass occupies residues Ile-26–Ala-46. The Cytoplasmic segment spans residues Cys-47–Ala-97. The VIMAG signature appears at Val-78–Gly-82.

This sequence belongs to the GLUTAMINE DUMPER 1 (TC 9.B.60) family. As to expression, expressed in the vascular tissues, even in the minor veins of the leaves.

Its subcellular location is the membrane. Functionally, probable subunit of an amino acid transporter involved in the regulation of the amino acid metabolism. Stimulates amino acid export by activating nonselective amino acid facilitators. In Arabidopsis thaliana (Mouse-ear cress), this protein is Protein GLUTAMINE DUMPER 7 (GDU7).